The chain runs to 280 residues: Vitamin B12-binding protein (280 aa).

The first 27 residues, 1-27 (MMPLGLFPLPRAAVVLLISLLTLPAQA), serve as a signal peptide directing secretion. The 248-residue stretch at 30–277 (RVISLSPSTT…QMASIPTPVA (248 aa)) folds into the Fe/B12 periplasmic-binding domain. Residue Y57 coordinates cyanocob(III)alamin. A disulfide bond links C190 and C266.

This sequence belongs to the BtuF family. The complex is composed of two ATP-binding proteins (BtuD), two transmembrane proteins (BtuC) and a solute-binding protein (BtuF).

It is found in the periplasm. Its function is as follows. Part of the ABC transporter complex BtuCDF involved in vitamin B12 import. Binds vitamin B12 and delivers it to the periplasmic surface of BtuC. In Yersinia pseudotuberculosis serotype O:1b (strain IP 31758), this protein is Vitamin B12-binding protein.